The sequence spans 358 residues: GDSL esterase/lipase At2g30220 (358 aa).

The N-terminal stretch at 1–22 (MYISKTIVFGLFVATLLVSCNA) is a signal peptide. Residue asparagine 25 is glycosylated (N-linked (GlcNAc...) asparagine). The Nucleophile role is filled by serine 40. N-linked (GlcNAc...) asparagine glycosylation is found at asparagine 102 and asparagine 324. Residues aspartate 332 and histidine 335 contribute to the active site.

It belongs to the 'GDSL' lipolytic enzyme family.

The protein resides in the secreted. In Arabidopsis thaliana (Mouse-ear cress), this protein is GDSL esterase/lipase At2g30220.